The following is a 445-amino-acid chain: GTPase Der (445 aa).

2 consecutive EngA-type G domains span residues 3 to 167 and 180 to 353; these read PVIA…YAGQ and IKIA…AAAM. Residues 9–16, 56–60, 119–122, 186–193, 233–237, and 298–301 contribute to the GTP site; these read GRPNVGKS, DTGGF, NKAE, DTAGL, and NKWD. Residues 354-438 enclose the KH-like domain; it reads SKLPTPKLTR…PLRIEFRSSN (85 aa).

This sequence belongs to the TRAFAC class TrmE-Era-EngA-EngB-Septin-like GTPase superfamily. EngA (Der) GTPase family. As to quaternary structure, associates with the 50S ribosomal subunit.

GTPase that plays an essential role in the late steps of ribosome biogenesis. The chain is GTPase Der from Burkholderia cenocepacia (strain ATCC BAA-245 / DSM 16553 / LMG 16656 / NCTC 13227 / J2315 / CF5610) (Burkholderia cepacia (strain J2315)).